We begin with the raw amino-acid sequence, 194 residues long: Holliday junction branch migration complex subunit RuvA (194 aa).

The segment at 1-64 is domain I; that stretch reads MISSLNGILE…EDALSLFGFA (64 aa). The interval 65-143 is domain II; sequence TTEELSLFET…KNWEAGVLSQ (79 aa). The flexible linker stretch occupies residues 144 to 149; it reads VTEANS. Positions 149-194 are domain III; it reads SDILATLTALGYSSSEAAKAISSLGDNGDLPLEERIKLALNYFNNK.

It belongs to the RuvA family. In terms of assembly, homotetramer. Forms an RuvA(8)-RuvB(12)-Holliday junction (HJ) complex. HJ DNA is sandwiched between 2 RuvA tetramers; dsDNA enters through RuvA and exits via RuvB. An RuvB hexamer assembles on each DNA strand where it exits the tetramer. Each RuvB hexamer is contacted by two RuvA subunits (via domain III) on 2 adjacent RuvB subunits; this complex drives branch migration. In the full resolvosome a probable DNA-RuvA(4)-RuvB(12)-RuvC(2) complex forms which resolves the HJ.

The protein localises to the cytoplasm. Its function is as follows. The RuvA-RuvB-RuvC complex processes Holliday junction (HJ) DNA during genetic recombination and DNA repair, while the RuvA-RuvB complex plays an important role in the rescue of blocked DNA replication forks via replication fork reversal (RFR). RuvA specifically binds to HJ cruciform DNA, conferring on it an open structure. The RuvB hexamer acts as an ATP-dependent pump, pulling dsDNA into and through the RuvAB complex. HJ branch migration allows RuvC to scan DNA until it finds its consensus sequence, where it cleaves and resolves the cruciform DNA. The chain is Holliday junction branch migration complex subunit RuvA from Dehalococcoides mccartyi (strain CBDB1).